The chain runs to 150 residues: uncharacterized protein (150 aa).

This is an uncharacterized protein from Streptomyces lincolnensis.